The sequence spans 1284 residues: Zinc finger protein 423 (1284 aa).

Disordered regions lie at residues 1 to 64 (MHKK…MEDE) and 87 to 117 (AHRC…SPTQ). Basic and acidic residues predominate over residues 34-46 (CDQKTSRALEDRN). 2 positions are modified to phosphoserine: serine 47 and serine 50. Residues 54 to 64 (RNEDDEDMEDE) are compositionally biased toward acidic residues. Residues 67–93 (YTCDHCQQDFESLADLTDHRAHRCPGD) form a C2H2-type 1; degenerate zinc finger. Polar residues predominate over residues 102–117 (WVASSPSSKDVASPTQ). 7 consecutive C2H2-type zinc fingers follow at residues 138–160 (YPCQ…EQIH), 166–188 (FKCT…IKLH), 194–216 (YHCH…LKTH), 222–244 (FKCT…MQAH), 263–286 (FMCD…LTRH), 295–318 (LQCI…HQAH), and 323–345 (HKCP…LDSH). The disordered stretch occupies residues 346-398 (RQPDSSNHSVSPDPVLGSVASMSSATPDSSASVERGSTPDSTLKPLRGQKKMR). A compositionally biased stretch (low complexity) spans 363 to 377 (SVASMSSATPDSSAS). The C2H2-type 9; degenerate zinc finger occupies 409 to 433 (YSCPYCSKRDFNSLAVLEIHLKTIH). C2H2-type zinc fingers lie at residues 441–464 (HTCQ…RKLH), 480–503 (FHCN…RVSH), and 517–540 (FFCN…QQAH). The C2H2-type 13; atypical zinc finger occupies 563-588 (YSCPYCTNSPIFGSILKLTKHIKENH). A disordered region spans residues 590 to 624 (NIPLAHSKKSKAEQSPVSSDVEVSSPKRQRLSASA). A Phosphoserine modification is found at serine 604. Positions 604 to 615 (SPVSSDVEVSSP) are enriched in low complexity. 7 consecutive C2H2-type zinc fingers follow at residues 632–654 (YPCN…LKLH), 662–684 (QACP…LTVH), 692–715 (YVCE…LDMH), 720–743 (YHCT…AVKH), 750–773 (YRCT…KHSH), 781–803 (HKCI…ITTH), and 807–830 (YNCK…REKH). A C2H2-type 21; degenerate zinc finger spans residues 886-908 (YGCDICGAAYTMEVLLQNHRLRD). C2H2-type zinc fingers lie at residues 930–952 (HKCN…LQTH), 959–981 (YMCP…KVTH), and 1020–1042 (FRCV…GTFH). Serine 1054 carries the post-translational modification Phosphoserine. The segment at 1064–1082 (YKCALCLKEFRSKQDLVKL) adopts a C2H2-type 25; degenerate zinc-finger fold. 5 C2H2-type zinc fingers span residues 1120–1143 (LRCP…QVDH), 1168–1190 (YQCI…VANH), 1198–1220 (HECK…LIEH), 1229–1252 (FKCP…FAVH), and 1259–1282 (YDCS…MSQH). The segment covering 1136-1147 (ESHMQVDHRDLT) has biased composition (basic and acidic residues). A disordered region spans residues 1136 to 1163 (ESHMQVDHRDLTPETSGPRKGTQTSPVP).

It belongs to the krueppel C2H2-type zinc-finger protein family. As to quaternary structure, homodimer. Interacts with EBF1. Interacts with SMAD1 and SMAD4. Interacts with PARP1. Interacts with CEP290. As to expression, expressed in brain, lung, skeletal muscle, heart, pancreas and kidney but not liver or placenta. Also expressed in aorta, ovary, pituitary, small intestine, fetal brain, fetal kidney and, within the adult brain, in the substantia nigra, medulla, amygdala, thalamus and cerebellum.

The protein localises to the nucleus. Functionally, transcription factor that can both act as an activator or a repressor depending on the context. Plays a central role in BMP signaling and olfactory neurogenesis. Associates with SMADs in response to BMP2 leading to activate transcription of BMP target genes. Acts as a transcriptional repressor via its interaction with EBF1, a transcription factor involved in terminal olfactory receptor neurons differentiation; this interaction preventing EBF1 to bind DNA and activate olfactory-specific genes. Involved in olfactory neurogenesis by participating in a developmental switch that regulates the transition from differentiation to maturation in olfactory receptor neurons. Controls proliferation and differentiation of neural precursors in cerebellar vermis formation. The chain is Zinc finger protein 423 (ZNF423) from Homo sapiens (Human).